The following is a 573-amino-acid chain: MSNEKSPFIVEGKLADNERLKRESNNLRGTITTDLKDDLTGGFTADNFQLIRFHGMYQQDDRDIRAERAKQKLEPLHNVMLRARLPGGVITPDQWLAIDKFADDHTMYGSIRLTTRQTFQFHGVLKPQIKLMHQTLNKVGIDSIATAGDVNRNVLCTSNPVESELHLHAYEWAKKISEHLLPKTRAYAEIWLDGEKVETTEKPVEPILGDNYLPRKFKTTVVIPPQNDVDVHANDLNFVAIAENGQLVGFNVLVGGGLAMTHGDKSTYPRKASDFGFIPLENTLDVAAAVVTTQRDWGNRVNRKNAKTKYTLERVGVDNFKAEVEKRAGVTFQESRPYEFTDRGDRFGWVEGIDGKYHLTVFIENGRILDYPGKTLKTGCAEIAKIHKGDFRLTANQNLIIAGVPPQDKDKIEALAREHGLIAPSISNQRLDSMACVALPTCPLAMAEAERYLPDAVTELEGLLAKHGLEEDSVIFRVTGCPNGCGRAMLSEVGLVGKGPGKYNLHLGGNREGTRIPRMYRENISEQEIMAELDTLLGQWAKERDSGEAFGDYVVRAGVVKPVVDSARDFYDQ.

[4Fe-4S] cluster is bound by residues Cys436, Cys442, Cys481, and Cys485. Cys485 provides a ligand contact to siroheme.

This sequence belongs to the nitrite and sulfite reductase 4Fe-4S domain family. As to quaternary structure, alpha(8)-beta(8). The alpha component is a flavoprotein, the beta component is a hemoprotein. Siroheme is required as a cofactor. It depends on [4Fe-4S] cluster as a cofactor.

It carries out the reaction hydrogen sulfide + 3 NADP(+) + 3 H2O = sulfite + 3 NADPH + 4 H(+). It functions in the pathway sulfur metabolism; hydrogen sulfide biosynthesis; hydrogen sulfide from sulfite (NADPH route): step 1/1. Functionally, component of the sulfite reductase complex that catalyzes the 6-electron reduction of sulfite to sulfide. This is one of several activities required for the biosynthesis of L-cysteine from sulfate. This is Sulfite reductase [NADPH] hemoprotein beta-component from Alteromonas mediterranea (strain DSM 17117 / CIP 110805 / LMG 28347 / Deep ecotype).